We begin with the raw amino-acid sequence, 151 residues long: Deoxyuridine 5'-triphosphate nucleotidohydrolase (151 aa).

Substrate is bound by residues 70–72 (RSG), asparagine 83, 87–89 (LID), and methionine 97.

This sequence belongs to the dUTPase family. Mg(2+) is required as a cofactor.

The enzyme catalyses dUTP + H2O = dUMP + diphosphate + H(+). The protein operates within pyrimidine metabolism; dUMP biosynthesis; dUMP from dCTP (dUTP route): step 2/2. This enzyme is involved in nucleotide metabolism: it produces dUMP, the immediate precursor of thymidine nucleotides and it decreases the intracellular concentration of dUTP so that uracil cannot be incorporated into DNA. The chain is Deoxyuridine 5'-triphosphate nucleotidohydrolase from Pseudomonas fluorescens (strain SBW25).